A 431-amino-acid chain; its full sequence is Trigger factor (431 aa).

One can recognise a PPIase FKBP-type domain in the interval 158–243; sequence GDLVAVETWS…VAEVSEPVVP (86 aa).

This sequence belongs to the FKBP-type PPIase family. Tig subfamily.

It is found in the cytoplasm. The catalysed reaction is [protein]-peptidylproline (omega=180) = [protein]-peptidylproline (omega=0). Involved in protein export. Acts as a chaperone by maintaining the newly synthesized protein in an open conformation. Functions as a peptidyl-prolyl cis-trans isomerase. In Stenotrophomonas maltophilia (strain R551-3), this protein is Trigger factor.